Consider the following 122-residue polypeptide: Ribosome-binding factor A (122 aa).

Belongs to the RbfA family. As to quaternary structure, monomer. Binds 30S ribosomal subunits, but not 50S ribosomal subunits or 70S ribosomes.

The protein resides in the cytoplasm. Functionally, one of several proteins that assist in the late maturation steps of the functional core of the 30S ribosomal subunit. Associates with free 30S ribosomal subunits (but not with 30S subunits that are part of 70S ribosomes or polysomes). Required for efficient processing of 16S rRNA. May interact with the 5'-terminal helix region of 16S rRNA. In Pelagibacter ubique (strain HTCC1062), this protein is Ribosome-binding factor A.